The sequence spans 278 residues: Putative transcription factor kapC (278 aa).

Over residues methionine 1–histidine 10 the composition is skewed to pro residues. Residues methionine 1–arginine 121 are disordered. Positions proline 56–isoleucine 68 are enriched in polar residues. The bZIP domain maps to proline 103–leucine 166. The tract at residues leucine 104–tyrosine 127 is basic motif. Positions arginine 109–alanine 119 are enriched in low complexity. Residues leucine 131–leucine 162 are leucine-zipper. Residues valine 173–serine 278 form a disordered region. Residues proline 198–glutamine 214 are compositionally biased toward low complexity. Residues valine 215 to asparagine 226 are compositionally biased toward polar residues. The segment covering glycine 254–proline 269 has biased composition (basic and acidic residues).

The protein belongs to the bZIP family.

It localises to the nucleus. Its function is as follows. Putative transcription factor. In Emericella nidulans (strain FGSC A4 / ATCC 38163 / CBS 112.46 / NRRL 194 / M139) (Aspergillus nidulans), this protein is Putative transcription factor kapC (kapC).